Reading from the N-terminus, the 46-residue chain is Pape peptide (46 aa).

Low complexity predominate over residues 1 to 10; that stretch reads KQLLKEALAP. The tract at residues 1–46 is disordered; that stretch reads KQLLKEALAPEPAPKPAPEPAPEPAPEPAPEAAPEPAAAAPEAAPE. The segment covering 11-33 has biased composition (pro residues); it reads EPAPKPAPEPAPEPAPEPAPEAA. PAPE repeat units follow at residues 16 to 19, 20 to 23, 24 to 27, and 28 to 31; these read PAPE. Residues 34–46 are compositionally biased toward low complexity; sequence PEPAAAAPEAAPE.

In terms of tissue distribution, expressed by the venom gland.

Its subcellular location is the secreted. This Tityus stigmurus (Brazilian scorpion) protein is Pape peptide.